An 82-amino-acid polypeptide reads, in one-letter code: Large ribosomal subunit protein uL23 (82 aa).

It belongs to the universal ribosomal protein uL23 family. As to quaternary structure, part of the 50S ribosomal subunit. Contacts protein L29.

Functionally, binds to 23S rRNA. One of the proteins that surrounds the polypeptide exit tunnel on the outside of the ribosome. The sequence is that of Large ribosomal subunit protein uL23 from Methanospirillum hungatei JF-1 (strain ATCC 27890 / DSM 864 / NBRC 100397 / JF-1).